The following is a 190-amino-acid chain: Selenoprotein S (190 aa).

The span at 1 to 13 (MEAEDGARVRNED) shows a compositional bias: basic and acidic residues. The interval 1–20 (MEAEDGARVRNEDVPPQNQD) is disordered. The chain crosses the membrane as a helical span at residues 30–50 (AFMSEYGWYLLFGCVGVYLLI). Low complexity predominate over residues 58–68 (SSTQTRSSSGS). The disordered stretch occupies residues 58-190 (SSTQTRSSSG…RRGPSAGGUG (133 aa)). Residues 79-120 (RRQEALEASRRRMQEEQDARAAEFREKQRMLEEEKRRQKIEM) are compositionally biased toward basic and acidic residues. Polar residues predominate over residues 136-151 (VAQQNTEEAASSSSLR). Position 189 (Sec189) is a non-standard amino acid, selenocysteine.

This sequence belongs to the selenoprotein S family.

The protein resides in the endoplasmic reticulum membrane. It localises to the cytoplasm. Involved in the degradation process of misfolded endoplasmic reticulum (ER) luminal proteins. Participates in the transfer of misfolded proteins from the ER to the cytosol, where they are destroyed by the proteasome in a ubiquitin-dependent manner. The sequence is that of Selenoprotein S (vimp) from Danio rerio (Zebrafish).